Here is a 111-residue protein sequence, read N- to C-terminus: Nucleoid-associated protein Cpha266_1171 (111 aa).

The protein belongs to the YbaB/EbfC family. As to quaternary structure, homodimer.

The protein resides in the cytoplasm. The protein localises to the nucleoid. Binds to DNA and alters its conformation. May be involved in regulation of gene expression, nucleoid organization and DNA protection. This Chlorobium phaeobacteroides (strain DSM 266 / SMG 266 / 2430) protein is Nucleoid-associated protein Cpha266_1171.